Here is a 74-residue protein sequence, read N- to C-terminus: Defensin Lc-def (74 aa).

The signal sequence occupies residues 1–27 (MEKKTVAALSFLFIVLFVAQEIAVTEA). 4 disulfide bridges follow: C30–C74, C41–C62, C47–C68, and C51–C70.

The protein localises to the secreted. Its function is as follows. Has antifungal activity against the phytopathogenic fungus A.niger VKM F-2259, but not against A.alternata VKM F-3047. Does not inhibit trypsin or chymotrypsin. This is Defensin Lc-def from Lens culinaris subsp. culinaris (Cultivated lentil).